The primary structure comprises 405 residues: Glucoside xylosyltransferase 1 (405 aa).

The Cytoplasmic portion of the chain corresponds to 1-2 (MR). A helical; Signal-anchor for type II membrane protein transmembrane segment spans residues 3-23 (IYLRTFGLCIVVALLSLVFLF). The Lumenal portion of the chain corresponds to 24-405 (SKHDEGSFSA…RLQRATPPGD (382 aa)). Residues 46 to 65 (SFNGAKAKQRPTATTSHRDV) form a disordered region. Asn202, Asn243, Asn277, and Asn372 each carry an N-linked (GlcNAc...) asparagine glycan.

Belongs to the glycosyltransferase 8 family.

The protein resides in the membrane. It catalyses the reaction 3-O-(beta-D-glucosyl)-L-seryl-[EGF-like domain protein] + UDP-alpha-D-xylose = 3-O-[alpha-D-xylosyl-(1-&gt;3)-beta-D-glucosyl]-L-seryl-[EGF-like domain protein] + UDP + H(+). Functionally, glycosyltransferase which elongates the O-linked glucose attached to EGF-like repeats in the extracellular domain of Notch proteins by catalyzing the addition of xylose. This is Glucoside xylosyltransferase 1 (gxylt1) from Danio rerio (Zebrafish).